A 417-amino-acid chain; its full sequence is Hydroxysteroid dehydrogenase-like protein 2 (417 aa).

NADP(+) contacts are provided by residues 17–23 (GASRGIG), K42, and D74. The active-site Proton acceptor is Y168. K172 contributes to the NADP(+) binding site. In terms of domain architecture, SCP2 spans 306–414 (SSPLQETFKA…KLEKILGQMN (109 aa)).

The protein belongs to the short-chain dehydrogenases/reductases (SDR) family.

Its subcellular location is the peroxisome. The protein localises to the mitochondrion. Has apparently no steroid dehydrogenase activity. Might act as a metabolic regulator that affects systemic adaptation to nutritional cues. In Xenopus tropicalis (Western clawed frog), this protein is Hydroxysteroid dehydrogenase-like protein 2 (hsdl2).